A 393-amino-acid polypeptide reads, in one-letter code: S-adenosylmethionine synthase (393 aa).

Glutamate 10 contacts Mg(2+). Histidine 16 contributes to the ATP binding site. Glutamate 44 lines the K(+) pocket. L-methionine-binding residues include glutamate 57 and glutamine 100. ATP is bound by residues 168–170 (DGK), 236–239 (SGRF), aspartate 247, 253–254 (RK), alanine 270, lysine 274, and lysine 278. Aspartate 247 is a binding site for L-methionine. Lysine 278 serves as a coordination point for L-methionine.

This sequence belongs to the AdoMet synthase family. As to quaternary structure, homotetramer. It depends on Mn(2+) as a cofactor. Mg(2+) is required as a cofactor. Requires Co(2+) as cofactor. The cofactor is K(+).

The protein resides in the cytoplasm. It carries out the reaction L-methionine + ATP + H2O = S-adenosyl-L-methionine + phosphate + diphosphate. The protein operates within amino-acid biosynthesis; S-adenosyl-L-methionine biosynthesis; S-adenosyl-L-methionine from L-methionine: step 1/1. Catalyzes the formation of S-adenosylmethionine from methionine and ATP. The reaction comprises two steps that are both catalyzed by the same enzyme: formation of S-adenosylmethionine (AdoMet) and triphosphate, and subsequent hydrolysis of the triphosphate. The polypeptide is S-adenosylmethionine synthase (METK) (Musa acuminata (Banana)).